Reading from the N-terminus, the 90-residue chain is Large ribosomal subunit protein bL27 (90 aa).

Residues 1 to 22 are disordered; it reads MAHKKAGGSTRNGRDSNPKMLG.

It belongs to the bacterial ribosomal protein bL27 family.

This Coxiella burnetii (strain Dugway 5J108-111) protein is Large ribosomal subunit protein bL27.